The chain runs to 226 residues: Protein B (226 aa).

Positions 37 to 100 (DNVQGTDYEK…FSTQHLANKV (64 aa)) are igG constant region-binding. Repeats lie at residues 158–168 (TKSKLDKEIWN), 169–179 (TRFTRDKKVLN), and 180–190 (VKEFKVYNTLN).

The protein resides in the secreted. Its function is as follows. Protein B belongs to the group of bacterial Fc-binding protein. The chain is Protein B from Streptococcus agalactiae.